The sequence spans 261 residues: Thiazole synthase (261 aa).

Catalysis depends on K101, which acts as the Schiff-base intermediate with DXP. 1-deoxy-D-xylulose 5-phosphate contacts are provided by residues G162, 188 to 189 (AG), and 210 to 211 (NT).

It belongs to the ThiG family. As to quaternary structure, homotetramer. Forms heterodimers with either ThiH or ThiS.

It is found in the cytoplasm. It catalyses the reaction [ThiS sulfur-carrier protein]-C-terminal-Gly-aminoethanethioate + 2-iminoacetate + 1-deoxy-D-xylulose 5-phosphate = [ThiS sulfur-carrier protein]-C-terminal Gly-Gly + 2-[(2R,5Z)-2-carboxy-4-methylthiazol-5(2H)-ylidene]ethyl phosphate + 2 H2O + H(+). It functions in the pathway cofactor biosynthesis; thiamine diphosphate biosynthesis. In terms of biological role, catalyzes the rearrangement of 1-deoxy-D-xylulose 5-phosphate (DXP) to produce the thiazole phosphate moiety of thiamine. Sulfur is provided by the thiocarboxylate moiety of the carrier protein ThiS. In vitro, sulfur can be provided by H(2)S. The protein is Thiazole synthase of Aromatoleum aromaticum (strain DSM 19018 / LMG 30748 / EbN1) (Azoarcus sp. (strain EbN1)).